A 941-amino-acid chain; its full sequence is Pre-mRNA-processing factor 6 (941 aa).

The tract at residues 1-79 is disordered; that stretch reads MNKKKKPFLG…DEDLNDTNYD (79 aa). The segment covering 39-65 has biased composition (basic and acidic residues); the sequence is DANDPVDDRHAPPGKRTVGDQMKKNQA. The span at 66 to 78 shows a compositional bias: acidic residues; sequence ADDDDEDLNDTNY. Position 143 is a phosphoserine (S143). A phosphothreonine mark is found at T180, T266, and T275. A Phosphoserine modification is found at S279. HAT repeat units follow at residues 384-416, 418-444, 445-476, 554-586, 588-620, 622-654, 689-721, 723-755, and 855-887; these read TDIRAKKRVLRKALEHVPNSVRLWKAAVELEEP, DARIMLSRAVECCPTSVELWLALARLE, TYENARKVLNKARENIPTDRHIWITAAKLEEA, NALECARAIYAYALQVFPSKKSVWLRAAYFEKN, GTRESLEALLQRAVAHCPKAEVLWLMGAKSKWL, GDVPAARSILALAFQANPNSEEIWLAAVKLESE, GNITAAQELCEEALRHYEDFPKLWMMKGQIEEQ, ELMERAREAYNQGLKKCPHSTPLWLLLSRLEEK, and RKITKAREWFHRTVKIDSDLGDAWAFFYKFELQ.

In terms of assembly, identified in the spliceosome B complex. Identified in the spliceosome C complex. Associates with the U5 snRNP particle. Component of the U4/U6-U5 tri-snRNP complex composed of the U4, U6 and U5 snRNAs and at least PRPF3, PRPF4, PRPF6, PRPF8, PRPF31, SNRNP200, TXNL4A, SNRNP40, DDX23, CD2BP2, PPIH, SNU13, EFTUD2, SART1 and USP39, LSm proteins LSm2-8 and Sm proteins. Interacts with ARAF1. Interacts with AR and NR3C1, but not ESR1, independently of the presence of hormones. Interacts with USH1G. Post-translationally, phosphorylated by PRP4K during spliceosome assembly.

It is found in the nucleus. The protein resides in the nucleoplasm. The protein localises to the nucleus speckle. In terms of biological role, involved in pre-mRNA splicing as component of the U4/U6-U5 tri-snRNP complex, one of the building blocks of the spliceosome. Enhances dihydrotestosterone-induced transactivation activity of AR, as well as dexamethasone-induced transactivation activity of NR3C1, but does not affect estrogen-induced transactivation. This chain is Pre-mRNA-processing factor 6 (Prpf6), found in Rattus norvegicus (Rat).